The primary structure comprises 320 residues: ATP-dependent 6-phosphofructokinase (320 aa).

G12 is a binding site for ATP. ADP is bound by residues 22–26 (RGVVR) and 55–60 (RYSVSD). ATP is bound by residues 73 to 74 (RF) and 103 to 106 (GDGS). Mg(2+) is bound at residue D104. Position 126 to 128 (126 to 128 (TID)) interacts with substrate. The Proton acceptor role is filled by D128. An ADP-binding site is contributed by R155. Substrate is bound by residues R163 and 170-172 (MGR). ADP contacts are provided by residues 186–188 (GCE), K212, and 214–216 (KKH). Residues E223, R244, and 250-253 (HIQR) each bind substrate.

Belongs to the phosphofructokinase type A (PFKA) family. ATP-dependent PFK group I subfamily. Prokaryotic clade 'B1' sub-subfamily. In terms of assembly, homotetramer. Mg(2+) is required as a cofactor.

Its subcellular location is the cytoplasm. It carries out the reaction beta-D-fructose 6-phosphate + ATP = beta-D-fructose 1,6-bisphosphate + ADP + H(+). Its pathway is carbohydrate degradation; glycolysis; D-glyceraldehyde 3-phosphate and glycerone phosphate from D-glucose: step 3/4. Allosterically activated by ADP and other diphosphonucleosides, and allosterically inhibited by phosphoenolpyruvate. Catalyzes the phosphorylation of D-fructose 6-phosphate to fructose 1,6-bisphosphate by ATP, the first committing step of glycolysis. This chain is ATP-dependent 6-phosphofructokinase, found in Buchnera aphidicola subsp. Schizaphis graminum (strain Sg).